A 120-amino-acid polypeptide reads, in one-letter code: Immunoglobulin kappa variable 2-30 (120 aa).

Residues 1–20 form the signal peptide; sequence MRLPAQLLGLLMLWVPGSSG. The tract at residues 21–43 is framework-1; the sequence is DVVMTQSPLSLPVTLGQPASISC. An Ig-like domain is found at 21-120; the sequence is DVVMTQSPLS…YYCMQGTHWP (100 aa). The cysteines at positions 43 and 113 are disulfide-linked. The complementarity-determining-1 stretch occupies residues 44–59; the sequence is RSSQSLVYSDGNTYLN. The framework-2 stretch occupies residues 60–74; that stretch reads WFQQRPGQSPRRLIY. Residues 75–81 are complementarity-determining-2; the sequence is KVSNRDS. The tract at residues 82–113 is framework-3; the sequence is GVPDRFSGSGSGTDFTLKISRVEAEDVGVYYC. Positions 114–120 are complementarity-determining-3; the sequence is MQGTHWP.

Immunoglobulins are composed of two identical heavy chains and two identical light chains; disulfide-linked.

Its subcellular location is the secreted. The protein localises to the cell membrane. Its function is as follows. V region of the variable domain of immunoglobulin light chains that participates in the antigen recognition. Immunoglobulins, also known as antibodies, are membrane-bound or secreted glycoproteins produced by B lymphocytes. In the recognition phase of humoral immunity, the membrane-bound immunoglobulins serve as receptors which, upon binding of a specific antigen, trigger the clonal expansion and differentiation of B lymphocytes into immunoglobulins-secreting plasma cells. Secreted immunoglobulins mediate the effector phase of humoral immunity, which results in the elimination of bound antigens. The antigen binding site is formed by the variable domain of one heavy chain, together with that of its associated light chain. Thus, each immunoglobulin has two antigen binding sites with remarkable affinity for a particular antigen. The variable domains are assembled by a process called V-(D)-J rearrangement and can then be subjected to somatic hypermutations which, after exposure to antigen and selection, allow affinity maturation for a particular antigen. This chain is Immunoglobulin kappa variable 2-30, found in Homo sapiens (Human).